Consider the following 66-residue polypeptide: Large ribosomal subunit protein bL35 (66 aa).

The segment covering Met-1 to Lys-46 has biased composition (basic residues). Residues Met-1–Val-50 are disordered.

Belongs to the bacterial ribosomal protein bL35 family.

In Lactobacillus delbrueckii subsp. bulgaricus (strain ATCC 11842 / DSM 20081 / BCRC 10696 / JCM 1002 / NBRC 13953 / NCIMB 11778 / NCTC 12712 / WDCM 00102 / Lb 14), this protein is Large ribosomal subunit protein bL35.